Reading from the N-terminus, the 932-residue chain is Lon protease homolog 2, peroxisomal (932 aa).

One can recognise a Lon N-terminal domain in the interval 11–259 (LALVPLPKGS…RVVELLARQV (249 aa)). Positions 304-340 (TGLTPPGAAGGRNNEDEKETNEVDELQKRLQEAELSP) are disordered. A compositionally biased stretch (basic and acidic residues) spans 328–340 (ELQKRLQEAELSP). 486–493 (GPPGTGKT) contacts ATP. In terms of domain architecture, Lon proteolytic spans 729–916 (HGRPGVVTGL…WEAIRQVWPG (188 aa)). Catalysis depends on residues Ser822 and Lys865. The Microbody targeting signal signature appears at 930-932 (SRL).

Belongs to the peptidase S16 family.

The protein localises to the peroxisome matrix. The enzyme catalyses Hydrolysis of proteins in presence of ATP.. ATP-dependent serine protease that mediates the selective degradation of misfolded and unassembled polypeptides in the peroxisomal matrix. Necessary for type 2 peroxisome targeting signal (PTS2)-containing protein processing and facilitates peroxisome matrix protein import. This is Lon protease homolog 2, peroxisomal from Aspergillus fumigatus (strain ATCC MYA-4609 / CBS 101355 / FGSC A1100 / Af293) (Neosartorya fumigata).